A 125-amino-acid chain; its full sequence is Small ribosomal subunit protein uS12 (125 aa).

A 3-methylthioaspartic acid modification is found at D89. Residues 101 to 125 are disordered; sequence SLDTAGVKDRKQSRSKYGAKRPKKA. Basic residues predominate over residues 113 to 125; sequence SRSKYGAKRPKKA.

It belongs to the universal ribosomal protein uS12 family. As to quaternary structure, part of the 30S ribosomal subunit. Contacts proteins S8 and S17. May interact with IF1 in the 30S initiation complex.

Functionally, with S4 and S5 plays an important role in translational accuracy. In terms of biological role, interacts with and stabilizes bases of the 16S rRNA that are involved in tRNA selection in the A site and with the mRNA backbone. Located at the interface of the 30S and 50S subunits, it traverses the body of the 30S subunit contacting proteins on the other side and probably holding the rRNA structure together. The combined cluster of proteins S8, S12 and S17 appears to hold together the shoulder and platform of the 30S subunit. In Thiobacillus denitrificans (strain ATCC 25259 / T1), this protein is Small ribosomal subunit protein uS12.